Consider the following 224-residue polypeptide: Holliday junction branch migration complex subunit RuvA (224 aa).

Residues 1-67 (MISWLKGEKV…EDGTSLYGFI (67 aa)) are domain I. The tract at residues 68-146 (EVNQRDLFRE…RFTDNDKTIH (79 aa)) is domain II. The tract at residues 147–157 (ENKNDIEANQF) is flexible linker. Residues 157–224 (FSKYIDEIYL…ILMKLSEKST (68 aa)) are domain III.

Belongs to the RuvA family. In terms of assembly, homotetramer. Forms an RuvA(8)-RuvB(12)-Holliday junction (HJ) complex. HJ DNA is sandwiched between 2 RuvA tetramers; dsDNA enters through RuvA and exits via RuvB. An RuvB hexamer assembles on each DNA strand where it exits the tetramer. Each RuvB hexamer is contacted by two RuvA subunits (via domain III) on 2 adjacent RuvB subunits; this complex drives branch migration. In the full resolvosome a probable DNA-RuvA(4)-RuvB(12)-RuvC(2) complex forms which resolves the HJ.

Its subcellular location is the cytoplasm. The RuvA-RuvB-RuvC complex processes Holliday junction (HJ) DNA during genetic recombination and DNA repair, while the RuvA-RuvB complex plays an important role in the rescue of blocked DNA replication forks via replication fork reversal (RFR). RuvA specifically binds to HJ cruciform DNA, conferring on it an open structure. The RuvB hexamer acts as an ATP-dependent pump, pulling dsDNA into and through the RuvAB complex. HJ branch migration allows RuvC to scan DNA until it finds its consensus sequence, where it cleaves and resolves the cruciform DNA. This chain is Holliday junction branch migration complex subunit RuvA, found in Prochlorococcus marinus (strain NATL2A).